Consider the following 558-residue polypeptide: Glutamine--tRNA ligase (558 aa).

Positions 36-46 match the 'HIGH' region motif; the sequence is PEPNGYLHLGH. ATP-binding positions include 37–39 and 43–49; these read EPN and HLGHAKS. L-glutamine contacts are provided by D69 and Y214. Residues T233, 263-264, and 271-273 contribute to the ATP site; these read RL and LSK. The short motif at 270 to 274 is the 'KMSKS' region element; the sequence is LLSKR.

The protein belongs to the class-I aminoacyl-tRNA synthetase family. Monomer.

The protein localises to the cytoplasm. The catalysed reaction is tRNA(Gln) + L-glutamine + ATP = L-glutaminyl-tRNA(Gln) + AMP + diphosphate. This is Glutamine--tRNA ligase from Nitrobacter hamburgensis (strain DSM 10229 / NCIMB 13809 / X14).